The primary structure comprises 122 residues: MFLTFSMCVNWIIVKMPNRSEELDRLLDKIINSPHRTEASKTLQEIENNQSYILNVQLKKLLRLHDDSFKNKCVSPINYMLEKYTPYMGHTEALQKEAELVDRDLRILEMTYQLIEKNRNSK.

Serine 33 is modified (phosphoserine).

This sequence belongs to the BLOC1S1 family. In terms of assembly, component of the biogenesis of lysosome-related organelles complex-1 (BLOC-1) composed of at least BLI1, BLS1, CNL1, KXD1, SNN1 and VAB2.

Its subcellular location is the endosome. Functionally, component of the biogenesis of lysosome-related organelles complex-1 (BLOC-1), a complex involved in endosomal cargo sorting. The chain is Biogenesis of lysosome-related organelles complex 1 subunit BLS1 (BLS1) from Saccharomyces cerevisiae (strain RM11-1a) (Baker's yeast).